The primary structure comprises 396 residues: Lysophospholipid transporter LplT (396 aa).

Over 1–17 (MSESVHTNTSLWSKGMK) the chain is Periplasmic. Residues 18–38 (AVIVAQFLSAFGDNALLFATL) form a helical membrane-spanning segment. Over 39-52 (ALLKAQFYPEWSQP) the chain is Cytoplasmic. The helical transmembrane segment at 53–73 (ILQMVFVGAYILLAPFVGQVA) threads the bilayer. The Periplasmic segment spans residues 74-90 (DSFAKGRVMMFANGLKL). A helical transmembrane segment spans residues 91–111 (LGAASICFGINPFLGYTLVGV). Residues 112-144 (GAAAYSPAKYGILGELTTGSKLVKANGLMEASA) are Cytoplasmic-facing. The chain crosses the membrane as a helical span at residues 145-165 (IAAILLGSVAGGVLADWHVLV). A topological domain (periplasmic) is located at residue A166. The chain crosses the membrane as a helical span at residues 167 to 187 (LAACALAYGGAVVANIYIPKL). The Cytoplasmic segment spans residues 188 to 225 (AARPGQSWNLINMTRSFLNACTSLWCNGETRFSLVGAS). A helical transmembrane segment spans residues 226 to 246 (LFWGAGVTLRFLLVLWVPVAL). Residues 247–255 (GITDNATPT) lie on the Periplasmic side of the membrane. Residues 256–276 (YLNAMVAIGIVVGAGAAAKLV) traverse the membrane as a helical segment. Over 277–279 (TLE) the chain is Cytoplasmic. Residues 280–300 (TVSRCMPAGILIGVVVLIFSL) form a helical membrane-spanning segment. Residues 301-303 (QHE) are Periplasmic-facing. Residues 304 to 324 (LLPAYALLMLIGVLGGFFVVP) traverse the membrane as a helical segment. The Cytoplasmic portion of the chain corresponds to 325–342 (LNALLQERGKKSVGAGNA). The helical transmembrane segment at 343–363 (IAVQNLGENSAMLLMLGIYSL) threads the bilayer. Residues 364-365 (AV) lie on the Periplasmic side of the membrane. A helical transmembrane segment spans residues 366–386 (MVGIPVVPIGIGFGALFALAI). The Cytoplasmic portion of the chain corresponds to 387 to 396 (TALWIWQRRH).

Belongs to the major facilitator superfamily. LplT (TC 2.A.1.42) family.

It is found in the cell inner membrane. Functionally, catalyzes the facilitated diffusion of 2-acyl-glycero-3-phosphoethanolamine (2-acyl-GPE) into the cell. This is Lysophospholipid transporter LplT from Shigella flexneri serotype 5b (strain 8401).